We begin with the raw amino-acid sequence, 261 residues long: Cytochrome c oxidase subunit 3 (261 aa).

Residues 1–15 (MTHQTHAYHMVNPSP) lie on the Mitochondrial matrix side of the membrane. The helical transmembrane segment at 16–33 (WPLTGAFSALLLTSGLVM) threads the bilayer. The Mitochondrial intermembrane portion of the chain corresponds to 34 to 38 (WFHYN). Residues 39–62 (SITLLTLGLLTNILTMYQWWRDVI) traverse the membrane as a helical segment. Residues 63 to 77 (REGTYQGHHTPIVQK) lie on the Mitochondrial matrix side of the membrane. Residues 78–99 (GLRYGMILFIVSEVFFFAGFFW) traverse the membrane as a helical segment. Over 100-129 (AFYHSSLVPTHDLGGCWPPTGISPLNPLEV) the chain is Mitochondrial intermembrane. Residues 130 to 150 (PLLNTSVLLASGVSITWAHHS) form a helical membrane-spanning segment. Residues 151 to 156 (LMEGKR) are Mitochondrial matrix-facing. Residues 157 to 178 (NHMNQALLITIMLGLYFTILQA) form a helical membrane-spanning segment. Residues 179–198 (SEYFETSFSISDGIYGSTFF) are Mitochondrial intermembrane-facing. The chain crosses the membrane as a helical span at residues 199–224 (MATGFHGLHVIIGSTFLIVCLLRQLK). The Mitochondrial matrix segment spans residues 225–232 (FHFTSKHH). A helical transmembrane segment spans residues 233 to 255 (FGFEAAAWYWHFVDVVWLFLYVS). Over 256–261 (IYWWGS) the chain is Mitochondrial intermembrane.

It belongs to the cytochrome c oxidase subunit 3 family. In terms of assembly, component of the cytochrome c oxidase (complex IV, CIV), a multisubunit enzyme composed of 14 subunits. The complex is composed of a catalytic core of 3 subunits MT-CO1, MT-CO2 and MT-CO3, encoded in the mitochondrial DNA, and 11 supernumerary subunits COX4I, COX5A, COX5B, COX6A, COX6B, COX6C, COX7A, COX7B, COX7C, COX8 and NDUFA4, which are encoded in the nuclear genome. The complex exists as a monomer or a dimer and forms supercomplexes (SCs) in the inner mitochondrial membrane with NADH-ubiquinone oxidoreductase (complex I, CI) and ubiquinol-cytochrome c oxidoreductase (cytochrome b-c1 complex, complex III, CIII), resulting in different assemblies (supercomplex SCI(1)III(2)IV(1) and megacomplex MCI(2)III(2)IV(2)).

The protein resides in the mitochondrion inner membrane. The enzyme catalyses 4 Fe(II)-[cytochrome c] + O2 + 8 H(+)(in) = 4 Fe(III)-[cytochrome c] + 2 H2O + 4 H(+)(out). Its function is as follows. Component of the cytochrome c oxidase, the last enzyme in the mitochondrial electron transport chain which drives oxidative phosphorylation. The respiratory chain contains 3 multisubunit complexes succinate dehydrogenase (complex II, CII), ubiquinol-cytochrome c oxidoreductase (cytochrome b-c1 complex, complex III, CIII) and cytochrome c oxidase (complex IV, CIV), that cooperate to transfer electrons derived from NADH and succinate to molecular oxygen, creating an electrochemical gradient over the inner membrane that drives transmembrane transport and the ATP synthase. Cytochrome c oxidase is the component of the respiratory chain that catalyzes the reduction of oxygen to water. Electrons originating from reduced cytochrome c in the intermembrane space (IMS) are transferred via the dinuclear copper A center (CU(A)) of subunit 2 and heme A of subunit 1 to the active site in subunit 1, a binuclear center (BNC) formed by heme A3 and copper B (CU(B)). The BNC reduces molecular oxygen to 2 water molecules using 4 electrons from cytochrome c in the IMS and 4 protons from the mitochondrial matrix. The chain is Cytochrome c oxidase subunit 3 (mt-Co3) from Mus musculus (Mouse).